The chain runs to 208 residues: Thymidylate kinase (208 aa).

An ATP-binding site is contributed by 11-18 (GIEGAGKT).

It belongs to the thymidylate kinase family.

It catalyses the reaction dTMP + ATP = dTDP + ADP. Functionally, phosphorylation of dTMP to form dTDP in both de novo and salvage pathways of dTTP synthesis. This is Thymidylate kinase from Hahella chejuensis (strain KCTC 2396).